The following is a 341-amino-acid chain: N-acetyl-gamma-glutamyl-phosphate reductase (341 aa).

Residue C149 is part of the active site.

It belongs to the NAGSA dehydrogenase family. Type 1 subfamily.

The protein localises to the cytoplasm. The enzyme catalyses N-acetyl-L-glutamate 5-semialdehyde + phosphate + NADP(+) = N-acetyl-L-glutamyl 5-phosphate + NADPH + H(+). Its pathway is amino-acid biosynthesis; L-arginine biosynthesis; N(2)-acetyl-L-ornithine from L-glutamate: step 3/4. In terms of biological role, catalyzes the NADPH-dependent reduction of N-acetyl-5-glutamyl phosphate to yield N-acetyl-L-glutamate 5-semialdehyde. In Methanocaldococcus jannaschii (strain ATCC 43067 / DSM 2661 / JAL-1 / JCM 10045 / NBRC 100440) (Methanococcus jannaschii), this protein is N-acetyl-gamma-glutamyl-phosphate reductase.